Consider the following 274-residue polypeptide: Formamidopyrimidine-DNA glycosylase (274 aa).

The Schiff-base intermediate with DNA role is filled by P2. The active-site Proton donor is the E3. K59 serves as the catalytic Proton donor; for beta-elimination activity. The DNA site is built by H93, R112, and R155. The FPG-type zinc finger occupies Q240–V274. The active-site Proton donor; for delta-elimination activity is the R264.

It belongs to the FPG family. Monomer. Zn(2+) serves as cofactor.

It carries out the reaction Hydrolysis of DNA containing ring-opened 7-methylguanine residues, releasing 2,6-diamino-4-hydroxy-5-(N-methyl)formamidopyrimidine.. The enzyme catalyses 2'-deoxyribonucleotide-(2'-deoxyribose 5'-phosphate)-2'-deoxyribonucleotide-DNA = a 3'-end 2'-deoxyribonucleotide-(2,3-dehydro-2,3-deoxyribose 5'-phosphate)-DNA + a 5'-end 5'-phospho-2'-deoxyribonucleoside-DNA + H(+). Involved in base excision repair of DNA damaged by oxidation or by mutagenic agents. Acts as a DNA glycosylase that recognizes and removes damaged bases. Has a preference for oxidized purines, such as 7,8-dihydro-8-oxoguanine (8-oxoG). Has AP (apurinic/apyrimidinic) lyase activity and introduces nicks in the DNA strand. Cleaves the DNA backbone by beta-delta elimination to generate a single-strand break at the site of the removed base with both 3'- and 5'-phosphates. This chain is Formamidopyrimidine-DNA glycosylase, found in Moorella thermoacetica (strain ATCC 39073 / JCM 9320).